The primary structure comprises 302 residues: Tyrosine recombinase XerC (302 aa).

Residues 6 to 90 form the Core-binding (CB) domain; it reads DLEVTCLQDY…AIKQWGEFLL (85 aa). The region spanning 111 to 290 is the Tyr recombinase domain; that stretch reads PLPKNMDVDS…DFQHLAKVYD (180 aa). Residues Arg150, Lys174, His242, Arg245, and His268 contribute to the active site. Tyr277 (O-(3'-phospho-DNA)-tyrosine intermediate) is an active-site residue.

It belongs to the 'phage' integrase family. XerC subfamily. As to quaternary structure, forms a cyclic heterotetrameric complex composed of two molecules of XerC and two molecules of XerD.

Its subcellular location is the cytoplasm. Its function is as follows. Site-specific tyrosine recombinase, which acts by catalyzing the cutting and rejoining of the recombining DNA molecules. The XerC-XerD complex is essential to convert dimers of the bacterial chromosome into monomers to permit their segregation at cell division. It also contributes to the segregational stability of plasmids. This chain is Tyrosine recombinase XerC, found in Shewanella putrefaciens (strain CN-32 / ATCC BAA-453).